A 319-amino-acid polypeptide reads, in one-letter code: MIFYTLEHILTHISFSLVSIGITIFLITLSVDEIIGLYDSSEKGVIGTFLCITGLLVTRWAYSGHFPLSNLYESLLFLSWSFAIIHMFPYLKKQKSYVRTITSSSTIFTQGLVTSGLLSEMQQSEILVPALQSQWLMMHVSMMVLGYAALLCGSLLSVALLVITFRKARKIFSKKKAFLKDSFSFVEIQYRNEPSNVLLSTSFISSKNYYRAQLIQQLDRWSSRIISLGFIFLTIGILSGAVWANEAWGSYWNWDPKETWAFITWTMFAIYLHTRTNPNFQSVNSAIVAFLGFIIIWICYFGVNLLGIGLHSYGSFNLH.

Helical transmembrane passes span 9-29 (ILTHISFSLVSIGITIFLITL), 44-64 (GVIGTFLCITGLLVTRWAYSG), 71-91 (LYESLLFLSWSFAIIHMFPYL), 143-163 (MVLGYAALLCGSLLSVALLVI), 225-245 (IISLGFIFLTIGILSGAVWAN), 259-273 (TWAFITWTMFAIYLH), and 286-306 (AIVAFLGFIIIWICYFGVNLL).

The protein belongs to the CcmF/CycK/Ccl1/NrfE/CcsA family. May interact with Ccs1.

The protein resides in the plastid. It localises to the chloroplast thylakoid membrane. Required during biogenesis of c-type cytochromes (cytochrome c6 and cytochrome f) at the step of heme attachment. The sequence is that of Cytochrome c biogenesis protein CcsA from Oenothera parviflora (Small-flowered evening primrose).